Reading from the N-terminus, the 426-residue chain is Cdc25-like protein phosphatase twine (426 aa).

The interval 1 to 27 is disordered; that stretch reads MASKRLMLDVEEEDDESGACGQENFDP. The Rhodanese domain maps to 265–371; the sequence is SQGGYEIIDC…FFGLYSQLCQ (107 aa). The active site involves Cys318.

The protein belongs to the MPI phosphatase family. In terms of tissue distribution, expressed in developing male and female germ cells.

The enzyme catalyses O-phospho-L-tyrosyl-[protein] + H2O = L-tyrosyl-[protein] + phosphate. Its function is as follows. Required during meiosis. Regulates the transition from the extended G2 phase to the onset of the first meiotic division. This chain is Cdc25-like protein phosphatase twine (twe), found in Drosophila melanogaster (Fruit fly).